The chain runs to 44 residues: MKRTLGGTSRKRKRTSGFRARMRTPDGRNVIRARRKKGRHRLSV.

2 stretches are compositionally biased toward basic residues: residues 1-22 and 31-44; these read MKRT…RARM and IRAR…RLSV. The tract at residues 1–44 is disordered; it reads MKRTLGGTSRKRKRTSGFRARMRTPDGRNVIRARRKKGRHRLSV.

This sequence belongs to the bacterial ribosomal protein bL34 family.

This Nostoc punctiforme (strain ATCC 29133 / PCC 73102) protein is Large ribosomal subunit protein bL34.